Consider the following 66-residue polypeptide: Large ribosomal subunit protein bL35 (66 aa).

Residues 1–26 (MPKMKTHRGAAKRFKKTGTGKLKRGH) show a composition bias toward basic residues. Positions 1-48 (MPKMKTHRGAAKRFKKTGTGKLKRGHAYTSHLFANKTQKQKRKLRKAT) are disordered.

This sequence belongs to the bacterial ribosomal protein bL35 family.

In Geobacillus sp. (strain WCH70), this protein is Large ribosomal subunit protein bL35.